The chain runs to 418 residues: Gamma-glutamyl phosphate reductase (418 aa).

This sequence belongs to the gamma-glutamyl phosphate reductase family.

It is found in the cytoplasm. It catalyses the reaction L-glutamate 5-semialdehyde + phosphate + NADP(+) = L-glutamyl 5-phosphate + NADPH + H(+). It functions in the pathway amino-acid biosynthesis; L-proline biosynthesis; L-glutamate 5-semialdehyde from L-glutamate: step 2/2. In terms of biological role, catalyzes the NADPH-dependent reduction of L-glutamate 5-phosphate into L-glutamate 5-semialdehyde and phosphate. The product spontaneously undergoes cyclization to form 1-pyrroline-5-carboxylate. The protein is Gamma-glutamyl phosphate reductase of Lacticaseibacillus casei (strain BL23) (Lactobacillus casei).